The chain runs to 642 residues: Tigger transposable element derived 5 (642 aa).

The disordered stretch occupies residues 1–54 (MYPASPSAGPALHPVPHRARLPRPRCLAEPPRSPAPGPGSTARPPPPAPGPRPR). The span at 31–52 (PRSPAPGPGSTARPPPPAPGPR) shows a compositional bias: pro residues. Residues 56 to 107 (AVKMTFRKAYSIKDKLQAIERVKGGERQASVCRDFGVPGGTLRGWLKDEPKL) enclose the HTH psq-type domain. 2 DNA-binding regions (H-T-H motif) span residues 83-103 (QASV…WLKD) and 154-187 (PVIQ…WQKR). Positions 121-194 (QRKKMRLANE…QKRHGISSQR (74 aa)) constitute an HTH CENPB-type domain. Low complexity predominate over residues 198 to 208 (EAEPPVAGPAP). A disordered region spans residues 198–230 (EAEPPVAGPAPVKEEPAQPSSAGLLLDGTPATL). Positions 239-364 (DEQIYNANVT…CLQQKAVLLV (126 aa)) constitute a DDE-1 domain. Residues 543 to 583 (GLPEGCGEEVAPAAPPSPASLPSSIGAGEEEEEEATEQGGV) are disordered.

The protein belongs to the tigger transposable element derived protein family.

It localises to the nucleus. This is Tigger transposable element derived 5 (Tigd5) from Rattus norvegicus (Rat).